Consider the following 938-residue polypeptide: Isoleucine--tRNA ligase (938 aa).

Positions 58-68 (PYANGSIHIGH) match the 'HIGH' region motif. Residue Glu-561 coordinates L-isoleucyl-5'-AMP. The 'KMSKS' region motif lies at 602 to 606 (KMSKS). Lys-605 contacts ATP. Zn(2+) contacts are provided by Cys-901, Cys-904, Cys-921, and Cys-924.

Belongs to the class-I aminoacyl-tRNA synthetase family. IleS type 1 subfamily. In terms of assembly, monomer. Requires Zn(2+) as cofactor.

Its subcellular location is the cytoplasm. It carries out the reaction tRNA(Ile) + L-isoleucine + ATP = L-isoleucyl-tRNA(Ile) + AMP + diphosphate. Catalyzes the attachment of isoleucine to tRNA(Ile). As IleRS can inadvertently accommodate and process structurally similar amino acids such as valine, to avoid such errors it has two additional distinct tRNA(Ile)-dependent editing activities. One activity is designated as 'pretransfer' editing and involves the hydrolysis of activated Val-AMP. The other activity is designated 'posttransfer' editing and involves deacylation of mischarged Val-tRNA(Ile). The sequence is that of Isoleucine--tRNA ligase from Sodalis glossinidius (strain morsitans).